The sequence spans 104 residues: DNA-directed RNA polymerase subunit omega (104 aa).

The segment at 76–104 (IEEEKRRKEEEEKKIKEQIAKEKEDGEKI) is disordered.

The protein belongs to the RNA polymerase subunit omega family. The RNAP catalytic core consists of 2 alpha, 1 beta, 1 beta' and 1 omega subunit. When a sigma factor is associated with the core the holoenzyme is formed, which can initiate transcription.

The enzyme catalyses RNA(n) + a ribonucleoside 5'-triphosphate = RNA(n+1) + diphosphate. In terms of biological role, promotes RNA polymerase assembly. Latches the N- and C-terminal regions of the beta' subunit thereby facilitating its interaction with the beta and alpha subunits. The protein is DNA-directed RNA polymerase subunit omega of Streptococcus pneumoniae (strain CGSP14).